A 138-amino-acid polypeptide reads, in one-letter code: Basic phospholipase A2 beta-bungarotoxin A-AL3 chain (138 aa).

A signal peptide spans 1-10 (LAVCVSLIGA). The propeptide occupies 11–18 (ANIPPQHL). 6 disulfides stabilise this stretch: Cys-45–Cys-137, Cys-47–Cys-63, Cys-62–Cys-118, Cys-69–Cys-111, Cys-79–Cys-104, and Cys-97–Cys-109. Ca(2+) is bound by residues Tyr-46, Gly-48, and Gly-50. Residue His-66 is part of the active site. Position 67 (Asp-67) interacts with Ca(2+). Asp-112 is a catalytic residue.

It belongs to the phospholipase A2 family. Group I subfamily. D49 sub-subfamily. In terms of assembly, heterodimer; disulfide-linked. The A chains have phospholipase A2 activity and the B chains show homology with the basic protease inhibitors. Ca(2+) is required as a cofactor. As to expression, expressed by the venom gland.

It localises to the secreted. The enzyme catalyses a 1,2-diacyl-sn-glycero-3-phosphocholine + H2O = a 1-acyl-sn-glycero-3-phosphocholine + a fatty acid + H(+). Functionally, snake venom phospholipase A2 (PLA2) that inhibits neuromuscular transmission by blocking acetylcholine release from the nerve termini. PLA2 catalyzes the calcium-dependent hydrolysis of the 2-acyl groups in 3-sn-phosphoglycerides. The sequence is that of Basic phospholipase A2 beta-bungarotoxin A-AL3 chain from Bungarus multicinctus (Many-banded krait).